The primary structure comprises 219 residues: Transmembrane emp24 domain-containing protein 10 (219 aa).

A signal peptide spans 1 to 31 (MSGSSGPQAQRGPCPFALLLLLLLGPSSVLA). The interval 1 to 142 (MSGSSGPQAQ…KNYEEIAKVE (142 aa)) is required for interaction with STX17. Topologically, residues 32 to 185 (ISFHLPVNSR…RDTNESTNTR (154 aa)) are lumenal. Residues 41–193 (RKCLREEIHK…TRVLYFSIFS (153 aa)) enclose the GOLD domain. Positions 147–178 (LEVELRRLEDLSESIVNDFAYMKKREEEMRDT) are required for TMED10 and TMED2 cis-Golgi network localization. Arg-171 and Arg-176 each carry dimethylated arginine. The N-linked (GlcNAc...) asparagine glycan is linked to Asn-179. The chain crosses the membrane as a helical span at residues 186-206 (VLYFSIFSMFCLIGLATWQVF). Residues 204–219 (QVFYLRRFFKAKKLIE) are interaction with COPG1. Topologically, residues 207–219 (YLRRFFKAKKLIE) are cytoplasmic. The interaction with ARF1 and IL1B stretch occupies residues 207-219 (YLRRFFKAKKLIE). The short motif at 211 to 212 (FF) is the COPII vesicle coat-binding element. The COPI vesicle coat-binding motif lies at 211–219 (FFKAKKLIE).

The protein belongs to the EMP24/GP25L family. In terms of assembly, predominantly dimeric and to a lesser extent monomeric in the ER. Monomer and dimer in ERGIC and cis-Golgi network. Forms homooligomer (via GOLD domain); the assembly is promoted by direct binding with leaderless cargos and may form a protein channel that facilitates cargo entry into the ERGIC. Forms heterooligomeric complexes with other members of the p24 family such as TMED2, TMED7 and TMED9. Interacts (via GOLD domain) with TMED2 (via GOLD domain); the complex is required for export of TMED10 from the ER to the cis-Golgi network; the complex is proposed to be involved in cis-Golgi network dynamics and / or biogenesis. Associates with the COPI vesicle coat subunits (coatomer). Tetramerization of the cytoplasmic domain at the Golgi membrane in vitro; the complex is proposed to interact with COPI coatomer and induce budding of the vesicles. Interacts with COPG1; the interaction involves TMED10 homodimer. Interacts with ARF1 (GDP-bound); the interaction probably involves a TMED10 oligomer. Interacts with SEC23A, SEC24B, SEC24C and SEC24D components of the coat protein complex II/COPII, indicative of an association of TMED10 with the COPII vesicle coat. Interacts with CD59. Interacts with MPPE1/PGAP5; the complex might recruit and sort GPI-anchored proteins to the ER-exit site, or the interaction might lead to recycling of PGAP5 between the ER and the Golgi. Interacts with F2LR1/PAR2. Interacts with KDELR2/ERD2; the interaction is disrupted by KDELR2 ligand. Found in a complex composed at least of SURF4, TMED2 and TMED10. Associates with the presenilin-dependent gamma-secretase complex. Interacts with STX17; the interaction is direct. Interacts with IL-1; the interaction is direct. Interacts with RAB21 (active GTP-bound form); the interaction is indirect and regulates TMED10 abundance and localization at the Golgi.

The protein localises to the endoplasmic reticulum membrane. Its subcellular location is the endoplasmic reticulum-Golgi intermediate compartment membrane. It localises to the golgi apparatus membrane. It is found in the golgi apparatus. The protein resides in the cis-Golgi network membrane. The protein localises to the trans-Golgi network membrane. Its subcellular location is the cytoplasmic vesicle. It localises to the secretory vesicle membrane. It is found in the cell membrane. The protein resides in the melanosome. Its function is as follows. Cargo receptor involved in protein vesicular trafficking and quality control in the endoplasmic reticulum (ER) and Golgi. The p24 protein family is a group of transmembrane proteins that bind coat protein complex I/COPI and coat protein complex II/COPII involved in vesicular trafficking between the membranes. Acts at the lumenal side for incorporation of secretory cargo molecules into transport vesicles and involved in vesicle coat formation at the cytoplasmic side. Mainly functions in the early secretory pathway and cycles between the ER, ER-Golgi intermediate compartment (ERGIC) and Golgi, mediating cargo transport through COPI and COPII-coated vesicles. In COPII vesicle-mediated anterograde transport, involved in the transport of GPI-anchored proteins by acting together with TMED2 as their cargo receptor; the function specifically implies SEC24C and SEC24D of the COPII vesicle coat and lipid raft-like microdomains of the ER. Recognizes GPI anchors structural remodeled in the ER by the GPI inositol-deacylase/PGAP1 and the metallophosphoesterase MPPE1/PGAP5. In COPI vesicle-mediated retrograde transport, involved in the biogenesis of COPI vesicles and vesicle coat recruitment. Involved in trafficking of amyloid beta A4 protein and soluble APP-beta release (independent from the modulation of gamma-secretase activity). Involved in the KDELR2-mediated retrograde transport of the toxin A subunit (CTX-A-K63)together with COPI and the COOH terminus of KDELR2. On Golgi membranes, acts as a primary receptor for ARF1-GDP, a GTP-binding protein involved in COPI-vesicle formation. Increases coatomer-dependent GTPase-activating activity of ARFGAP2 which mediates the hydrolysis of ARF1-bound GTP and therefore modulates protein trafficking from the Golgi apparatus. Involved in the exocytic trafficking of G protein-coupled receptors F2LR1/PAR2 (trypsin and tryspin-like enzyme receptor), OPRM1 (opioid receptor) and P2RY4 (UTD and UDP receptor) from the Golgi to the plasma membrane, thus contributing to receptor resensitization. In addition to its cargo receptor activity, may also act as a protein channel after oligomerization, facilitating the post-translational entry of leaderless cytoplasmic cargo into the ERGIC. Involved in the translocation into ERGIC, the vesicle entry and the secretion of leaderless cargos (lacking the secretion signal sequence), including the mature form of interleukin 1/IL-1 family members, the alpha-crystallin B chain HSPB5, the carbohydrate-binding proteins galectin-1/LGALS1 and galectin-3/LGALS3, the microtubule-associated protein Tau/MAPT, and the annexin A1/ANXA1; the translocation process is dependent on cargo protein unfolding and enhanced by chaperones HSP90AB1 and HSP90B1/GRP9. Could also associates with the presenilin-dependent gamma-secretase complex in order to regulate gamma-cleavages of the amyloid beta A4 protein to yield amyloid-beta 40/Abeta40. The sequence is that of Transmembrane emp24 domain-containing protein 10 (TMED10) from Bos taurus (Bovine).